We begin with the raw amino-acid sequence, 340 residues long: Adenosine kinase (340 aa).

The active site involves Asp-293.

The protein belongs to the carbohydrate kinase PfkB family. In terms of assembly, monomer. Mg(2+) serves as cofactor.

It catalyses the reaction adenosine + ATP = AMP + ADP + H(+). The protein operates within purine metabolism; AMP biosynthesis via salvage pathway; AMP from adenosine: step 1/1. Its function is as follows. ATP dependent phosphorylation of adenosine and other related nucleoside analogs to monophosphate derivatives. This is Adenosine kinase (adk) from Dictyostelium discoideum (Social amoeba).